A 1053-amino-acid chain; its full sequence is Middle cell wall protein (1053 aa).

Positions 1-23 (MKKVVNSVLASALALTVAPMAFA) are cleaved as a signal peptide. 3 SLH domains span residues 26–89 (EAAT…KLAQ), 90–153 (FSNT…KGVW), and 154–203 (PNSM…FGTD).

In terms of assembly, the middle cell wall layer is composed of subunits of the middle cell wall protein. These proteins form a hexagonal array with a lattice constant of 14.5 nM in the middle cell wall layers.

It is found in the secreted. Its subcellular location is the cell wall. It localises to the S-layer. The middle wall protein binds to peptidoglycan and to the outer cell wall protein. This is Middle cell wall protein from Brevibacillus brevis (strain 47 / JCM 6285 / NBRC 100599).